The chain runs to 97 residues: Large ribosomal subunit protein bL28 (97 aa).

The protein belongs to the bacterial ribosomal protein bL28 family.

In Bartonella henselae (strain ATCC 49882 / DSM 28221 / CCUG 30454 / Houston 1) (Rochalimaea henselae), this protein is Large ribosomal subunit protein bL28.